A 95-amino-acid polypeptide reads, in one-letter code: Enhancer of yellow 2b transcription factor (95 aa).

This sequence belongs to the ENY2 family. Expressed specifically in testis.

Functionally, testis-specific paralog of the ubiquitously expressed transcription and mRNA export factor e(y)2. Cannot functionally replace e(y)2. This is Enhancer of yellow 2b transcription factor (e(y)2b) from Drosophila melanogaster (Fruit fly).